Reading from the N-terminus, the 174-residue chain is Dehydratase AgnL8 (174 aa).

Residues Tyr-24, Tyr-44, and Phe-47 each contribute to the substrate site. Residues His-79 and His-104 contribute to the active site.

It belongs to the scytalone dehydratase family. As to quaternary structure, homotrimer. Each subunit contains an active site, located in the central part of the hydrophobic core of the monomer, which functions independently.

It participates in secondary metabolite biosynthesis. Its function is as follows. Dehydratase; part of the gene cluster that mediates the biosynthesis of agnestins, dihydroxy-xanthone metabolites. The pathway begins with the assembly and cyclization of atrochrysone thioester by the non-reducing polyketide synthase Agnpks1. The atrochrysone carboxyl ACP thioesterase AgnL7 then breaks the thioester bond and releases the atrochrysone carboxylic acid as the first enzyme-free intermediate. The decarboxylase AgnL1 then catalyzes the concerted decarboxylation-elimination required to convert atochrysone carboxylic acid into emodin anthrone, which is further oxidized to emodin by the anthrone oxygenase AgnL2. Emodin then undergoes reduction catalyzed by the oxidoreductase AgnL4 to yield the dihydroquinone tautomer which is the substrate for reduction by the short chain dehydrogenase AgnL6 reduction to produce hydroxyketone, followed by AgnL8 dehydration and likely spontaneous autoxidation to chrysophanol. Baeyer-Villiger oxidation by the oxidase AgnL3 leads to monodictyphenone via cleavage of the C-10/C-10a bond of chrysophanol. Alternative cleavage at the C-4a/C-10 bond of chrysophanol also leads to the formation some cephalone F. Further conversion to agnestins A and B, requires reduction to dihydro-monodictyphenone, oxidation to agnestin C probably via an epoxide, and rearrangement to either agnestin A or agnestin B directly, although agnestin A or agnestin B can also interconvert. Within the cluster, AgnR1 is the only unassigned oxidoreductase present which could be involved in this conversion. However, AgnR1 seems not to be involved in this step, and thus genes involved in the proposed oxidation/reduction may be located elsewhere on the genome. Further agnestin A derivatives are probably formed by spontaneous decarboxylations, dehydrations and methanolysis reactions. The sequence is that of Dehydratase AgnL8 from Paecilomyces divaricatus (Penicillium divaricatum).